We begin with the raw amino-acid sequence, 134 residues long: Probable salivary secreted peptide (134 aa).

A signal peptide spans 1–24 (MGAQKTIAYLAIIAIAVIFAQVNT).

The protein resides in the secreted. This chain is Probable salivary secreted peptide, found in Bombus ignitus (Bumblebee).